Here is a 652-residue protein sequence, read N- to C-terminus: Acetyl-coenzyme A synthetase (652 aa).

Residues arginine 191–arginine 194, threonine 311, and asparagine 335 contribute to the CoA site. ATP contacts are provided by residues glycine 387–proline 389, aspartate 411–threonine 416, aspartate 500, and arginine 515. Position 523 (serine 523) interacts with CoA. Arginine 526 contacts ATP. Mg(2+)-binding residues include valine 537, histidine 539, and isoleucine 542. A CoA-binding site is contributed by arginine 584. The residue at position 609 (lysine 609) is an N6-acetyllysine.

Belongs to the ATP-dependent AMP-binding enzyme family. Mg(2+) is required as a cofactor. Post-translationally, acetylated. Deacetylation by the SIR2-homolog deacetylase activates the enzyme.

It catalyses the reaction acetate + ATP + CoA = acetyl-CoA + AMP + diphosphate. In terms of biological role, catalyzes the conversion of acetate into acetyl-CoA (AcCoA), an essential intermediate at the junction of anabolic and catabolic pathways. Acs undergoes a two-step reaction. In the first half reaction, Acs combines acetate with ATP to form acetyl-adenylate (AcAMP) intermediate. In the second half reaction, it can then transfer the acetyl group from AcAMP to the sulfhydryl group of CoA, forming the product AcCoA. Functionally, enables the cell to use acetate during aerobic growth to generate energy via the TCA cycle, and biosynthetic compounds via the glyoxylate shunt. Acetylates CheY, the response regulator involved in flagellar movement and chemotaxis. The polypeptide is Acetyl-coenzyme A synthetase (Sodalis glossinidius (strain morsitans)).